Consider the following 62-residue polypeptide: Photosystem II reaction center protein Z (62 aa).

2 helical membrane passes run 8 to 28 (TLFA…VVFA) and 41 to 61 (FSGI…NSFV).

The protein belongs to the PsbZ family. As to quaternary structure, PSII is composed of 1 copy each of membrane proteins PsbA, PsbB, PsbC, PsbD, PsbE, PsbF, PsbH, PsbI, PsbJ, PsbK, PsbL, PsbM, PsbT, PsbY, PsbZ, Psb30/Ycf12, at least 3 peripheral proteins of the oxygen-evolving complex and a large number of cofactors. It forms dimeric complexes.

The protein resides in the plastid. The protein localises to the chloroplast thylakoid membrane. May control the interaction of photosystem II (PSII) cores with the light-harvesting antenna, regulates electron flow through the 2 photosystem reaction centers. PSII is a light-driven water plastoquinone oxidoreductase, using light energy to abstract electrons from H(2)O, generating a proton gradient subsequently used for ATP formation. The protein is Photosystem II reaction center protein Z of Tupiella akineta (Green alga).